The chain runs to 316 residues: Transaldolase 2 (316 aa).

Catalysis depends on Lys131, which acts as the Schiff-base intermediate with substrate.

It belongs to the transaldolase family. Type 1 subfamily. In terms of assembly, homodimer.

The protein localises to the cytoplasm. The enzyme catalyses D-sedoheptulose 7-phosphate + D-glyceraldehyde 3-phosphate = D-erythrose 4-phosphate + beta-D-fructose 6-phosphate. The protein operates within carbohydrate degradation; pentose phosphate pathway; D-glyceraldehyde 3-phosphate and beta-D-fructose 6-phosphate from D-ribose 5-phosphate and D-xylulose 5-phosphate (non-oxidative stage): step 2/3. Transaldolase is important for the balance of metabolites in the pentose-phosphate pathway. The chain is Transaldolase 2 from Salmonella paratyphi A (strain ATCC 9150 / SARB42).